A 1224-amino-acid polypeptide reads, in one-letter code: Tyrosine-protein kinase abl-1 (1224 aa).

An SH3 domain is found at Ser-115 to Ser-188. An SH2 domain is found at Trp-194–Ala-284. The 252-residue stretch at Ile-311 to Leu-562 folds into the Protein kinase domain. Residues Leu-317–Val-325, Lys-340, and Glu-385–Asn-391 contribute to the ATP site. The active-site Proton acceptor is the Asp-432. Positions Asp-450 to Trp-474 match the Kinase activation loop motif. Positions Leu-579–His-620 are enriched in basic and acidic residues. 5 disordered regions span residues Leu-579–Pro-671, Lys-736–Val-775, Lys-796–Met-881, Leu-914–Asn-937, and Arg-968–Gly-1016. Polar residues-rich tracts occupy residues Ser-639–Arg-655 and Ala-746–Leu-760. Composition is skewed to basic and acidic residues over residues Arg-797 to Lys-819 and Pro-864 to Lys-877. Positions Gln-973–Ser-984 are enriched in polar residues. Over residues Tyr-1001–Gly-1016 the composition is skewed to basic and acidic residues.

The protein belongs to the protein kinase superfamily. Tyr protein kinase family. ABL subfamily. In terms of assembly, interacts (via SH2 and SH3 domains) with mig-13; the interaction is direct. May interact with soem-1.

It localises to the cell membrane. It is found in the cytoplasm. It carries out the reaction L-tyrosyl-[protein] + ATP = O-phospho-L-tyrosyl-[protein] + ADP + H(+). Functionally, functions downstream of migratory protein mig-13 and is involved in Q neuroblast migration during larval development. Recruited by mig-13 to the leading edge of Q neuroblasts and their descendents to signal downstream, likely to the wve-1 pathway, and direct migration along the anteroposterior body axis. Promotes germline cell apoptosis in response to oxidative, osmotic and heat shock stresses. This Caenorhabditis elegans protein is Tyrosine-protein kinase abl-1 (abl-1).